The sequence spans 733 residues: Envelope glycoprotein H (733 aa).

An N-terminal signal peptide occupies residues 1-14 (MLFLILLCVTGAQA). Residues 15 to 707 (ITTPAPPRPA…LYANRAMNII (693 aa)) are Virion surface-facing. N-linked (GlcNAc...) asparagine; by host glycans are attached at residues N78 and N119. Residues 185-249 (GAYQLAGMAT…NSDAEELLLL (65 aa)) are interaction with gL. 7 N-linked (GlcNAc...) asparagine; by host glycosylation sites follow: N266, N431, N561, N573, N612, N627, and N689. A helical transmembrane segment spans residues 708–728 (IILLFTIAALAGVFIVYKIVM). The Intravirion segment spans residues 729-733 (YMTFK).

It belongs to the herpesviridae glycoprotein H family. In terms of assembly, interacts with glycoprotein L (gL); this interaction is necessary for the correct processing and cell surface expression of gH. The heterodimer gH/gL seems to interact with gB trimers during fusion. In terms of processing, N-glycosylated, O-glycosylated, and sialylated.

Its subcellular location is the virion membrane. The protein localises to the host cell membrane. The protein resides in the host endosome membrane. In terms of biological role, the heterodimer glycoprotein H-glycoprotein L is required for the fusion of viral and plasma membranes leading to virus entry into the host cell. Following initial binding to host receptor, membrane fusion is mediated by the fusion machinery composed of gB and the heterodimer gH/gL. May also be involved in the fusion between the virion envelope and the outer nuclear membrane during virion morphogenesis. The polypeptide is Envelope glycoprotein H (Alcelaphine herpesvirus 1 (strain C500) (AlHV-1)).